A 270-amino-acid chain; its full sequence is Checkpoint signal transducer rad24 (270 aa).

Phosphoserine occurs at positions 34 and 66. The tract at residues 242–270 (AAAGGNTEGAQENAPSNAPEGEAEPKADA) is disordered.

Belongs to the 14-3-3 family. Homodimer. Binds preferentially to mei2 phosphorylated by ran1/pat1. Binds preferentially to cdc25 phosphorylated by srk1 during G2; the interaction is increased during osmotic stress. Interacts with byr2. Interacts with rad25.

The protein localises to the cytoplasm. Acts in cell cycle and stress checkpoint signaling by sequestering signal transducers regulated by the checkpoints. Required for the DNA damage checkpoint that ensures that DNA damage is repaired before mitosis is attempted. During environmental stress, sequesters srk1-phosphorylated cdc25 in the cytoplasm to delay the G2/M transition. Sequesters byr2 in the cytoplasm to prevent its translocation to the plasma membrane. Sequesters ran1/pat1-phosphorylated mei2 from its non-coding RNA activators (including meiRNA), to prevent meiotic induction in vegetative cells and to regulate meiosis I. This Schizosaccharomyces pombe (strain 972 / ATCC 24843) (Fission yeast) protein is Checkpoint signal transducer rad24.